The primary structure comprises 584 residues: 4-hydroxybenzoate decarboxylase subunit C (584 aa).

The protein belongs to the UbiD family. In terms of assembly, component of the decarboxylase complex composed of the subunits B and C (Potential). The subunit D usually found in other organisms seems to be absent.

It carries out the reaction 4-hydroxybenzoate + H(+) = phenol + CO2. Its activity is regulated as follows. The enzyme activity is enhanced by Mg(2+), Fe(2+), Mn(2+) and Ca(2+). No stimulation is observed with Cu(2+) and Zn(2+). In terms of biological role, catalyzes the reversible decarboxylation of 4-hydroxybenzoate. This Chlamydia pneumoniae (Chlamydophila pneumoniae) protein is 4-hydroxybenzoate decarboxylase subunit C.